An 89-amino-acid chain; its full sequence is FXYD domain-containing ion transport regulator 4 (89 aa).

An N-terminal signal peptide occupies residues 1-20 (MERVTLALLLLAGLTALEAN). The Extracellular portion of the chain corresponds to 21-38 (DPFANKDDPFYYDWKNLQ). A helical transmembrane segment spans residues 39 to 59 (LSGLICGGLLAIAGIAAVLSG). Residues 60 to 89 (KCKCKSSQKQHSPVPEKAIPLITPGSATTC) lie on the Cytoplasmic side of the membrane.

Belongs to the FXYD family. Regulatory subunit of the sodium/potassium-transporting ATPase which is composed of a catalytic alpha subunit, a non-catalytic beta subunit and a regulatory subunit. The regulatory subunit, a member of the FXYD protein family, modulates the enzymatic activity in a tissue- and isoform-specific way by changing affinities of the Na+/K+-ATPase toward Na(+), K(+) or ATP.

It localises to the cell membrane. It is found in the basolateral cell membrane. In terms of biological role, associates with and regulates the activity of the sodium/potassium-transporting ATPase (NKA) which catalyzes the hydrolysis of ATP coupled with the exchange of Na(+) and K(+) ions across the plasma membrane. Increases the apparent affinity of the transporter for Na(+) and increases NKA activity. The sequence is that of FXYD domain-containing ion transport regulator 4 (FXYD4) from Homo sapiens (Human).